We begin with the raw amino-acid sequence, 1088 residues long: DNA ligase 4 (1088 aa).

Disordered stretches follow at residues 1–56 (MALS…KFND) and 73–117 (TTTT…TTTT). 2 stretches are compositionally biased toward low complexity: residues 25–53 (DFKN…YNNK) and 73–90 (TTTT…INKT). The span at 95-105 (DDIFDDEDEDS) shows a compositional bias: acidic residues. ATP is bound by residues Glu414, Lys416, Arg421, Glu467, Phe514, Glu574, Lys579, Lys596, and Lys598. Lys416 (N6-AMP-lysine intermediate) is an active-site residue. Glu467 is a binding site for Mg(2+). Glu574 is a binding site for Mg(2+). BRCT domains follow at residues 827 to 917 (PTQN…PKYM) and 984 to 1088 (CWWS…EILD).

This sequence belongs to the ATP-dependent DNA ligase family. Requires Mg(2+) as cofactor.

The protein localises to the nucleus. It catalyses the reaction ATP + (deoxyribonucleotide)n-3'-hydroxyl + 5'-phospho-(deoxyribonucleotide)m = (deoxyribonucleotide)n+m + AMP + diphosphate.. DNA ligase involved in DNA non-homologous end joining (NHEJ); required for double-strand break (DSB) repair. This is DNA ligase 4 (lig4) from Dictyostelium discoideum (Social amoeba).